Here is a 106-residue protein sequence, read N- to C-terminus: uncharacterized protein (106 aa).

The protein resides in the mitochondrion. This is an uncharacterized protein from Arabidopsis thaliana (Mouse-ear cress).